Reading from the N-terminus, the 87-residue chain is Small ribosomal subunit protein uS15c (87 aa).

This sequence belongs to the universal ribosomal protein uS15 family. Part of the 30S ribosomal subunit.

The protein resides in the plastid. Its subcellular location is the chloroplast. This is Small ribosomal subunit protein uS15c (rps15) from Solanum tuberosum (Potato).